The following is a 281-amino-acid chain: Nucleotide-binding protein Patl_0571 (281 aa).

8 to 15 lines the ATP pocket; it reads GRSGSGKS. A GTP-binding site is contributed by 56-59; sequence DVRN.

It belongs to the RapZ-like family.

In terms of biological role, displays ATPase and GTPase activities. This chain is Nucleotide-binding protein Patl_0571, found in Pseudoalteromonas atlantica (strain T6c / ATCC BAA-1087).